Reading from the N-terminus, the 225-residue chain is Uridylate kinase (225 aa).

9–10 contacts ATP; it reads GS. A UMP-binding site is contributed by Gly-44. ATP is bound by residues Gly-45 and Arg-49. UMP-binding positions include Asp-66 and 114-120; that span reads THPGHTT. Thr-140, Asn-141, Tyr-146, and Asp-149 together coordinate ATP.

The protein belongs to the UMP kinase family. In terms of assembly, homohexamer.

It is found in the cytoplasm. It catalyses the reaction UMP + ATP = UDP + ADP. The protein operates within pyrimidine metabolism; CTP biosynthesis via de novo pathway; UDP from UMP (UMPK route): step 1/1. With respect to regulation, inhibited by UTP. Catalyzes the reversible phosphorylation of UMP to UDP. The polypeptide is Uridylate kinase (Thermococcus sibiricus (strain DSM 12597 / MM 739)).